A 1363-amino-acid polypeptide reads, in one-letter code: Spike glycoprotein (1363 aa).

Positions 1–13 (MFLILLISLPTAF) are cleaved as a signal peptide. The Extracellular portion of the chain corresponds to 14–1307 (AVIGDLKCTT…GTYEYYVKWP (1294 aa)). A BetaCoV S1-NTD domain is found at 15–298 (VIGDLKCTTV…DFMSEIKCKT (284 aa)). 5 disulfide bridges follow: Cys-21–Cys-165, Cys-160–Cys-193, Cys-172–Cys-252, Cys-286–Cys-296, and Cys-331–Cys-356. N-linked (GlcNAc...) asparagine; by host glycans are attached at residues Asn-59 and Asn-133. N-linked (GlcNAc...) asparagine; by host glycosylation is present at Asn-198. The region spanning 329–617 (PDCNIEAWLN…DVNSGTTCST (289 aa)) is the BetaCoV S1-CTD domain. The N-linked (GlcNAc...) asparagine; by host glycan is linked to Asn-359. 2 disulfide bridges follow: Cys-374-Cys-427 and Cys-386-Cys-615. Residues Asn-437, Asn-649, Asn-676, Asn-696, Asn-714, Asn-739, and Asn-788 are each glycosylated (N-linked (GlcNAc...) asparagine; by host). 2 fusion peptide regions span residues 914–935 (SAIEDLLFSKVKLSDVGFVEAY) and 933–953 (EAYNNCTGGAEIRDLICVQSY). Asn-937 carries N-linked (GlcNAc...) asparagine; by host glycosylation. Residues Cys-938 and Cys-949 are joined by a disulfide bond. Residues 1014–1064 (QKLIANAFNNALGAIQEGFDATNSALVKIQAVVNANAEALNNLLQQLSNRF) are heptad repeat 1. Residues 1043–1087 (QAVVNANAEALNNLLQQLSNRFGAISSSLQEILSRLDALEAQAQI) adopt a coiled-coil conformation. Residues Asn-1194, Asn-1224, Asn-1234, Asn-1253, Asn-1267, and Asn-1288 are each glycosylated (N-linked (GlcNAc...) asparagine; by host). The segment at 1258–1296 (APDLSLDYINVTFLDLQDEMNRLQEAIKVLNQSYINLKD) is heptad repeat 2. Residues 1269–1297 (TFLDLQDEMNRLQEAIKVLNQSYINLKDI) are a coiled coil. The helical transmembrane segment at 1308-1328 (WYVWLLIGFAGVAMLVLLFFI) threads the bilayer. Residues 1329–1363 (CCCTGCGTSCFKKCGGCCDDYTGHQELVIKTSHDD) are Cytoplasmic-facing. Positions 1359-1363 (TSHDD) match the KxHxx motif.

It belongs to the betacoronaviruses spike protein family. Homotrimer; each monomer consists of a S1 and a S2 subunit. The resulting peplomers protrude from the virus surface as spikes. Specific enzymatic cleavages in vivo yield mature proteins. The precursor is processed into S1 and S2 by host cell furin or another cellular protease to yield the mature S1 and S2 proteins. Additionally, a second cleavage leads to the release of a fusion peptide after viral attachment to host cell receptor. Post-translationally, the cytoplasmic Cys-rich domain is palmitoylated. Spike glycoprotein is digested within host endosomes.

The protein localises to the virion membrane. It is found in the host endoplasmic reticulum-Golgi intermediate compartment membrane. It localises to the host cell membrane. Attaches the virion to the cell membrane by interacting with host receptor, initiating the infection. Functionally, mediates fusion of the virion and cellular membranes by acting as a class I viral fusion protein. Under the current model, the protein has at least three conformational states: pre-fusion native state, pre-hairpin intermediate state, and post-fusion hairpin state. During viral and target cell membrane fusion, the coiled coil regions (heptad repeats) assume a trimer-of-hairpins structure, positioning the fusion peptide in close proximity to the C-terminal region of the ectodomain. The formation of this structure appears to drive apposition and subsequent fusion of viral and target cell membranes. Its function is as follows. Acts as a viral fusion peptide which is unmasked following S2 cleavage occurring upon virus endocytosis. The protein is Spike glycoprotein of Bos taurus (Bovine).